The primary structure comprises 135 residues: Large ribosomal subunit protein uL16 (135 aa).

Belongs to the universal ribosomal protein uL16 family. As to quaternary structure, part of the 50S ribosomal subunit.

In terms of biological role, binds 23S rRNA and is also seen to make contacts with the A and possibly P site tRNAs. This Bdellovibrio bacteriovorus (strain ATCC 15356 / DSM 50701 / NCIMB 9529 / HD100) protein is Large ribosomal subunit protein uL16.